The primary structure comprises 254 residues: 5'/3'-nucleotidase SurE (254 aa).

A divalent metal cation-binding residues include aspartate 9, aspartate 10, serine 40, and asparagine 93.

Belongs to the SurE nucleotidase family. Requires a divalent metal cation as cofactor.

It is found in the cytoplasm. The enzyme catalyses a ribonucleoside 5'-phosphate + H2O = a ribonucleoside + phosphate. It catalyses the reaction a ribonucleoside 3'-phosphate + H2O = a ribonucleoside + phosphate. It carries out the reaction [phosphate](n) + H2O = [phosphate](n-1) + phosphate + H(+). Its function is as follows. Nucleotidase with a broad substrate specificity as it can dephosphorylate various ribo- and deoxyribonucleoside 5'-monophosphates and ribonucleoside 3'-monophosphates with highest affinity to 3'-AMP. Also hydrolyzes polyphosphate (exopolyphosphatase activity) with the preference for short-chain-length substrates (P20-25). Might be involved in the regulation of dNTP and NTP pools, and in the turnover of 3'-mononucleotides produced by numerous intracellular RNases (T1, T2, and F) during the degradation of various RNAs. The polypeptide is 5'/3'-nucleotidase SurE (Photorhabdus laumondii subsp. laumondii (strain DSM 15139 / CIP 105565 / TT01) (Photorhabdus luminescens subsp. laumondii)).